Consider the following 78-residue polypeptide: MEEAKQKVVDFLNSKSGSKSKFYFNDFTDLFPDMKQREVKKILTALVNDEVLEYWSSGSTTMYGLKGAGKQAAAEHED.

The protein to A.fulgidus DsrD.

Functionally, may play an essential role in dissimilatory sulfite reduction. This is Protein DsvD (dsvD) from Nitratidesulfovibrio vulgaris (strain ATCC 29579 / DSM 644 / CCUG 34227 / NCIMB 8303 / VKM B-1760 / Hildenborough) (Desulfovibrio vulgaris).